The following is a 156-amino-acid chain: Probable succinate transporter subunit YjjB (156 aa).

The next 4 membrane-spanning stretches (helical) occupy residues 7–27, 54–74, 86–106, and 128–148; these read WALLQDMVLAAIPALGFAMVF, FGMNIELASLVASIMIGVIGI, VFTVAAVIPMFPGISAYTAMI, and FLKASFIVGALSIGLSLPGLW.

This sequence belongs to the ThrE exporter (TC 2.A.79) family. The transporter is composed of YjjB and YjjP.

The protein localises to the cell inner membrane. Involved in succinate export with YjjP. Both proteins are required for export. The chain is Probable succinate transporter subunit YjjB from Yersinia pseudotuberculosis serotype I (strain IP32953).